Here is a 126-residue protein sequence, read N- to C-terminus: Aspartate 1-decarboxylase (126 aa).

Residue S25 is the Schiff-base intermediate with substrate; via pyruvic acid of the active site. S25 is modified (pyruvic acid (Ser)). A substrate-binding site is contributed by T57. The active-site Proton donor is the Y58. 73-75 (GAA) provides a ligand contact to substrate.

It belongs to the PanD family. In terms of assembly, heterooctamer of four alpha and four beta subunits. Requires pyruvate as cofactor. Is synthesized initially as an inactive proenzyme, which is activated by self-cleavage at a specific serine bond to produce a beta-subunit with a hydroxyl group at its C-terminus and an alpha-subunit with a pyruvoyl group at its N-terminus.

Its subcellular location is the cytoplasm. It carries out the reaction L-aspartate + H(+) = beta-alanine + CO2. Its pathway is cofactor biosynthesis; (R)-pantothenate biosynthesis; beta-alanine from L-aspartate: step 1/1. Its function is as follows. Catalyzes the pyruvoyl-dependent decarboxylation of aspartate to produce beta-alanine. The polypeptide is Aspartate 1-decarboxylase (Yersinia pseudotuberculosis serotype IB (strain PB1/+)).